The sequence spans 88 residues: Carboxysome shell vertex protein CsoS4A (88 aa).

Positions 1-76 (MLICKVLKPL…SDLTIVGIID (76 aa)) constitute a BMV domain.

Belongs to the CcmL/EutN family. CsoS4 subfamily. Homopentamer.

It localises to the carboxysome. Functionally, probably forms vertices in the carboxysome, a polyhedral inclusion where RuBisCO (ribulose bisphosphate carboxylase, cbbL-cbbS) is sequestered. Has been modeled to induce curvature upon insertion into an otherwise flat hexagonal layer of major carboxysome subunits. Has not been identified in purified carboxysomes; it is expected to be present in very low amounts. This Prochlorococcus marinus subsp. pastoris (strain CCMP1986 / NIES-2087 / MED4) protein is Carboxysome shell vertex protein CsoS4A.